Consider the following 124-residue polypeptide: Small ribosomal subunit protein uS10 (124 aa).

The protein belongs to the universal ribosomal protein uS10 family.

The chain is Small ribosomal subunit protein uS10 (rps20) from Dictyostelium discoideum (Social amoeba).